The chain runs to 948 residues: MDKSSTMLVHYDKGTPAVANEIKEALEGNDVEAKVDAMKKAIMLLLNGETIPQLFITIIRYVLPSEDHTIQKLLLLYLELIEKTDSKGKVLPEMILICQNLRNNLQHPNEYIRGVTLRFLCRMKETEIVEPLTPSVLQNLEHRHPFVRRNAILAIMSIYKLPQGDQLFVDAPEMIEKVLSTEQDPSAKRNAFLMLFTCAEERAVNYLLSNVDKVSDWNESLQMVVLELIRSVCKTKPAEKGKYIKIIISLLSATSSAVIYECAGTLVSLSSAPTAIRAAANTYCQLLLSQSDNNVKLILLDRLYELKTLHRDIMVELIIDVLRALSSPNLDIRRKTLDISLDLITHHNINEVVQMLKKEVVKTQSGELEKNGEYRQMLIQAIHACAVKFPEVASTVVHLLMDFLGDSNVASALDVVVFVREIIETNPKLRVSIITRLLDTFYQIRAGKVCPCALWIIGEYCLSLSEVESGISTITQCLGELPFYSVSEESEPTETSKKIQPTSSAMVSSRKPVILADGTYATQSAASETTFSSPTVVQGSLTSGNLRALLLTGDFFLGAVVACTLTKLVLRLEEVQSSKTEVNKTVTQALLIMVSMLQLGQSPVSPHPIDNDSYERIVLCIKLLCHRNDEMKKIWLESCRQSFVKMISEKQLREMEELKAKTQTTHAQPDDLIDFFHLKSRKGMSQLELEDQVQDDLKRATGEFTKDENDANKLNRILQLTGFSDPVYAEAYVTVHHYDIALEVTVINRTKETLQNLCLELATMGDLKLVERPQNYSLAPERSMQIKANIKVSSTETGVIFGNIVYETSNVMERNVVVLNDIHIDIMDYISPAVCSEVAFRTMWAEFEWENKVAVNTTIQNEREFLDHIIKSTNMKCLTAPSAIEGECGFLAANLYAKSVFGEDALVNVSIEKQTDGALSGYIRIRSKTQGIALSLGDKITLKQKGSS.

HEAT repeat units follow at residues 49 to 87, 92 to 126, 127 to 164, 274 to 311, 312 to 349, and 391 to 428; these read ETIPQLFITIIRYVLPSEDHTIQKLLLLYLELIEKTDSK, PEMILICQNLRNNLQHPNEYIRGVTLRFLCRMKET, EIVEPLTPSVLQNLEHRHPFVRRNAILAIMSIYKLPQG, TAIRAAANTYCQLLLSQSDNNVKLILLDRLYELKTLHR, DIMVELIIDVLRALSSPNLDIRRKTLDISLDLITHHNI, and EVASTVVHLLMDFLGDSNVASALDVVVFVREIIETNPK.

Oligomeric complex that consists of at least the alpha, beta, beta', gamma, delta, epsilon and zeta subunits.

Its subcellular location is the cytoplasm. The protein resides in the golgi apparatus membrane. It localises to the cytoplasmic vesicle. It is found in the COPI-coated vesicle membrane. Its function is as follows. The coatomer is a cytosolic protein complex that binds to dilysine motifs and reversibly associates with Golgi non-clathrin-coated vesicles, which further mediate biosynthetic protein transport from the ER, via the Golgi up to the trans Golgi network. Coatomer complex is required for budding from Golgi membranes, and is essential for the retrograde Golgi-to-ER transport of dilysine-tagged proteins. This chain is Coatomer subunit beta-1, found in Arabidopsis thaliana (Mouse-ear cress).